A 533-amino-acid chain; its full sequence is CTP synthase (533 aa).

Positions 1–269 are amidoligase domain; that stretch reads MKKNLKILVI…HEILSSKLNI (269 aa). Residue Ser-16 coordinates CTP. Ser-16 lines the UTP pocket. ATP contacts are provided by residues 17 to 22 and Asp-73; that span reads GIGKGV. Mg(2+) contacts are provided by Asp-73 and Glu-143. Residues 150–152, 190–195, and Lys-226 contribute to the CTP site; these read DME and KSKPTQ. Residues 190–195 and Lys-226 each bind UTP; that span reads KSKPTQ. Residues 304–533 enclose the Glutamine amidotransferase type-1 domain; that stretch reads YAELDDSYAS…LFLGLIKACI (230 aa). Gly-355 lines the L-glutamine pocket. Cys-382 acts as the Nucleophile; for glutamine hydrolysis in catalysis. Residues 383 to 386, Glu-406, and Arg-466 each bind L-glutamine; that span reads LGLQ. Residues His-511 and Glu-513 contribute to the active site.

It belongs to the CTP synthase family. Homotetramer.

It carries out the reaction UTP + L-glutamine + ATP + H2O = CTP + L-glutamate + ADP + phosphate + 2 H(+). It catalyses the reaction L-glutamine + H2O = L-glutamate + NH4(+). The catalysed reaction is UTP + NH4(+) + ATP = CTP + ADP + phosphate + 2 H(+). It functions in the pathway pyrimidine metabolism; CTP biosynthesis via de novo pathway; CTP from UDP: step 2/2. Its activity is regulated as follows. Allosterically activated by GTP, when glutamine is the substrate; GTP has no effect on the reaction when ammonia is the substrate. The allosteric effector GTP functions by stabilizing the protein conformation that binds the tetrahedral intermediate(s) formed during glutamine hydrolysis. Inhibited by the product CTP, via allosteric rather than competitive inhibition. Its function is as follows. Catalyzes the ATP-dependent amination of UTP to CTP with either L-glutamine or ammonia as the source of nitrogen. Regulates intracellular CTP levels through interactions with the four ribonucleotide triphosphates. The chain is CTP synthase from Borreliella burgdorferi (strain ATCC 35210 / DSM 4680 / CIP 102532 / B31) (Borrelia burgdorferi).